Reading from the N-terminus, the 697-residue chain is Serine/threonine-protein kinase tousled-like 2 (697 aa).

2 disordered regions span residues 27–136 (KAPL…TAPV) and 289–315 (LAKR…NKTN). Polar residues predominate over residues 31–44 (NSESSNQSLCSLGS). Positions 46–62 (SDKELEQTPEKKQNDQR) are enriched in basic and acidic residues. Residues 111–131 (SSPQHSLSNPLPLPSQQCSPP) show a composition bias toward low complexity. 2 coiled-coil regions span residues 264–293 (AFQN…AKRK) and 334–372 (FKLR…IHNE). Positions 387–666 (YLLLHLLGRG…VQQLACDPYL (280 aa)) constitute a Protein kinase domain. ATP is bound by residues 393 to 401 (LGRGGFSEV) and K416. The active-site Proton acceptor is D517.

Belongs to the protein kinase superfamily. Ser/Thr protein kinase family. Monomer. May form homodimers; homodimerization may enhance autophosphoylation and enzymatic activity. Heterodimer with TLK1. Requires Mg(2+) as cofactor. Post-translationally, phosphorylated. Autophosphorylated; phosphorylation promotes the assembly of higher order oligomers and enzymatic activity.

The protein resides in the nucleus. It is found in the nucleoplasm. Its subcellular location is the cytoplasm. It localises to the perinuclear region. The protein localises to the cytoskeleton. The catalysed reaction is L-seryl-[protein] + ATP = O-phospho-L-seryl-[protein] + ADP + H(+). It catalyses the reaction L-threonyl-[protein] + ATP = O-phospho-L-threonyl-[protein] + ADP + H(+). Its function is as follows. Serine/threonine-protein kinase involved in the process of chromatin assembly and probably also DNA replication, transcription, repair, and chromosome segregation. Negative regulator of amino acid starvation-induced autophagy. This Xenopus tropicalis (Western clawed frog) protein is Serine/threonine-protein kinase tousled-like 2.